The chain runs to 416 residues: Squalene synthase (416 aa).

NADP(+) is bound by residues arginine 52 and arginine 77. Aspartate 80, glutamate 83, and aspartate 84 together coordinate Mg(2+). Arginine 218 provides a ligand contact to NADP(+). A helical transmembrane segment spans residues 284–304 (SVFNFCAIPQVMAIATLAACY). Residues lysine 315 and arginine 317 each coordinate NADP(+). A helical transmembrane segment spans residues 384 to 404 (PIYLSFIMLLAALSWQYLSTL).

Belongs to the phytoene/squalene synthase family. Mg(2+) serves as cofactor.

It is found in the endoplasmic reticulum membrane. The catalysed reaction is 2 (2E,6E)-farnesyl diphosphate + NADPH + H(+) = squalene + 2 diphosphate + NADP(+). It carries out the reaction 2 (2E,6E)-farnesyl diphosphate + NADH + H(+) = squalene + 2 diphosphate + NAD(+). It catalyses the reaction presqualene diphosphate + NADH + H(+) = squalene + diphosphate + NAD(+). The enzyme catalyses presqualene diphosphate + NADPH + H(+) = squalene + diphosphate + NADP(+). The catalysed reaction is 2 (2E,6E)-farnesyl diphosphate = presqualene diphosphate + diphosphate. The protein operates within terpene metabolism; lanosterol biosynthesis; lanosterol from farnesyl diphosphate: step 1/3. In terms of biological role, catalyzes the condensation of 2 farnesyl pyrophosphate (FPP) moieties to form squalene. Proceeds in two distinct steps. In the first half-reaction, two molecules of FPP react to form the stable presqualene diphosphate intermediate (PSQPP), with concomitant release of a proton and a molecule of inorganic diphosphate. In the second half-reaction, PSQPP undergoes heterolysis, isomerization, and reduction with NADPH or NADH to form squalene. It is the first committed enzyme of the sterol biosynthesis pathway. The sequence is that of Squalene synthase (Fdft1) from Mus musculus (Mouse).